The chain runs to 197 residues: FMN-dependent NADH:quinone oxidoreductase (197 aa).

FMN contacts are provided by residues Ser10, 16-18, 93-96, and 137-140; these read SQS, MYNF, and TRGG.

It belongs to the azoreductase type 1 family. Homodimer. It depends on FMN as a cofactor.

The enzyme catalyses 2 a quinone + NADH + H(+) = 2 a 1,4-benzosemiquinone + NAD(+). The catalysed reaction is N,N-dimethyl-1,4-phenylenediamine + anthranilate + 2 NAD(+) = 2-(4-dimethylaminophenyl)diazenylbenzoate + 2 NADH + 2 H(+). Quinone reductase that provides resistance to thiol-specific stress caused by electrophilic quinones. Functionally, also exhibits azoreductase activity. Catalyzes the reductive cleavage of the azo bond in aromatic azo compounds to the corresponding amines. The sequence is that of FMN-dependent NADH:quinone oxidoreductase from Shewanella frigidimarina (strain NCIMB 400).